A 469-amino-acid chain; its full sequence is MTTSSNLISSDIEEYLKVHENKDMLRVLTCGSVDDGKSTLIGRLLFDSKMIFEDQMAAIEKDSKRFNTTDDSFDLALLVDGLQSEREQGITIDVAYRYFTTEQRKFIIADTPGHEQYTRNMATGASTCDLAIILIDARHGVQVQTRRHSFICSQLGIKHVIIAINKMDAIDYDQATYQKIKKEYREFAEDLSFSDVRFVPISALKGDNVVNESPNMTWYPGSTLLKLLNTVSVEQDRSESFRFQVQYVNRPNLDFRGFCGTIGSGEIRVGDTVATLPSNKESRVKSIVTFDGELEKAVAGQAVTLTLEDEIDISRGDMLVRPHDKPFSVSHFEADVVWMTEEPLCVDREYAIKVGSKSVYGYADAINHKVDVNTLEKQSAQQLALNEIGNCHFAVTEPVQFDAYDTNRSTGSFIIIDRLTNVTVGAGMIRNPIEVKSTKAHEYSEFEIEMNALVRKHFPHWGAKDISKG.

A tr-type G domain is found at 22 to 236 (KDMLRVLTCG…LLNTVSVEQD (215 aa)). The G1 stretch occupies residues 31-38 (GSVDDGKS). A GTP-binding site is contributed by 31 to 38 (GSVDDGKS). A G2 region spans residues 89 to 93 (GITID). Residues 110-113 (DTPG) are G3. Residues 110-114 (DTPGH) and 165-168 (NKMD) each bind GTP. Positions 165 to 168 (NKMD) are G4. Residues 202–204 (SAL) are G5.

Belongs to the TRAFAC class translation factor GTPase superfamily. Classic translation factor GTPase family. CysN/NodQ subfamily. Heterodimer composed of CysD, the smaller subunit, and CysN.

It catalyses the reaction sulfate + ATP + H(+) = adenosine 5'-phosphosulfate + diphosphate. The protein operates within sulfur metabolism; hydrogen sulfide biosynthesis; sulfite from sulfate: step 1/3. In terms of biological role, with CysD forms the ATP sulfurylase (ATPS) that catalyzes the adenylation of sulfate producing adenosine 5'-phosphosulfate (APS) and diphosphate, the first enzymatic step in sulfur assimilation pathway. APS synthesis involves the formation of a high-energy phosphoric-sulfuric acid anhydride bond driven by GTP hydrolysis by CysN coupled to ATP hydrolysis by CysD. The chain is Sulfate adenylyltransferase subunit 1 from Shewanella woodyi (strain ATCC 51908 / MS32).